The sequence spans 228 residues: Phosphoribosylformylglycinamidine synthase subunit PurQ (228 aa).

In terms of domain architecture, Glutamine amidotransferase type-1 spans 2–225 (KAAVISFPGS…INQTEGADVR (224 aa)). Residue cysteine 86 is the Nucleophile of the active site. Catalysis depends on residues histidine 194 and glutamate 196.

In terms of assembly, part of the FGAM synthase complex composed of 1 PurL, 1 PurQ and 2 PurS subunits.

It is found in the cytoplasm. It carries out the reaction N(2)-formyl-N(1)-(5-phospho-beta-D-ribosyl)glycinamide + L-glutamine + ATP + H2O = 2-formamido-N(1)-(5-O-phospho-beta-D-ribosyl)acetamidine + L-glutamate + ADP + phosphate + H(+). The enzyme catalyses L-glutamine + H2O = L-glutamate + NH4(+). It participates in purine metabolism; IMP biosynthesis via de novo pathway; 5-amino-1-(5-phospho-D-ribosyl)imidazole from N(2)-formyl-N(1)-(5-phospho-D-ribosyl)glycinamide: step 1/2. Its function is as follows. Part of the phosphoribosylformylglycinamidine synthase complex involved in the purines biosynthetic pathway. Catalyzes the ATP-dependent conversion of formylglycinamide ribonucleotide (FGAR) and glutamine to yield formylglycinamidine ribonucleotide (FGAM) and glutamate. The FGAM synthase complex is composed of three subunits. PurQ produces an ammonia molecule by converting glutamine to glutamate. PurL transfers the ammonia molecule to FGAR to form FGAM in an ATP-dependent manner. PurS interacts with PurQ and PurL and is thought to assist in the transfer of the ammonia molecule from PurQ to PurL. The chain is Phosphoribosylformylglycinamidine synthase subunit PurQ from Lacticaseibacillus paracasei (strain ATCC 334 / BCRC 17002 / CCUG 31169 / CIP 107868 / KCTC 3260 / NRRL B-441) (Lactobacillus paracasei).